The primary structure comprises 265 residues: Mlc titration factor A (265 aa).

Zn(2+)-binding residues include histidine 111, histidine 148, histidine 152, and glutamate 211.

Belongs to the MtfA family. In terms of assembly, interacts with Mlc. Zn(2+) serves as cofactor.

Its subcellular location is the cytoplasm. Its function is as follows. Involved in the modulation of the activity of the glucose-phosphotransferase system (glucose-PTS). Interacts with the transcriptional repressor Mlc, preventing its interaction with DNA and leading to the modulation of expression of genes regulated by Mlc, including ptsG, which encodes the PTS system glucose-specific EIICB component. In terms of biological role, shows zinc-dependent metallopeptidase activity. This chain is Mlc titration factor A, found in Shigella dysenteriae serotype 1 (strain Sd197).